A 78-amino-acid chain; its full sequence is MSATTACWPAFTVLGEARGDQVDWSRLYRDTGLVKMSRKPRASSPFSNNHPSTPKRFPRQPRREKGPVKEVPGTKGSP.

A signal peptide spans 1–19 (MSATTACWPAFTVLGEARG). The disordered stretch occupies residues 35-78 (KMSRKPRASSPFSNNHPSTPKRFPRQPRREKGPVKEVPGTKGSP).

As to expression, expressed in chondrosarcoma, melanoma, cartilage and testis, but not in other normal tissues.

It is found in the cytoplasm. The protein resides in the cytoskeleton. Its subcellular location is the microtubule organizing center. The protein localises to the centrosome. It localises to the spindle pole. In terms of biological role, may play an important role in maintaining centrosome integrity during mitosis. The sequence is that of Chondrosarcoma-associated gene 1 protein from Homo sapiens (Human).